The chain runs to 409 residues: 2,3-bisphosphoglycerate-independent phosphoglycerate mutase 1 (409 aa).

Residues 163–173 (SDADPKVEGKP) are compositionally biased toward basic and acidic residues. The tract at residues 163 to 184 (SDADPKVEGKPPKKIKALDGSP) is disordered.

It belongs to the BPG-independent phosphoglycerate mutase family. A-PGAM subfamily.

It catalyses the reaction (2R)-2-phosphoglycerate = (2R)-3-phosphoglycerate. It functions in the pathway carbohydrate degradation; glycolysis; pyruvate from D-glyceraldehyde 3-phosphate: step 3/5. Functionally, catalyzes the interconversion of 2-phosphoglycerate and 3-phosphoglycerate. This chain is 2,3-bisphosphoglycerate-independent phosphoglycerate mutase 1 (apgM1), found in Methanothermobacter thermautotrophicus (strain ATCC 29096 / DSM 1053 / JCM 10044 / NBRC 100330 / Delta H) (Methanobacterium thermoautotrophicum).